Consider the following 502-residue polypeptide: Reduced meiotic recombination protein C1442.04c (502 aa).

Serine 328, serine 330, and serine 331 each carry phosphoserine. 3 disordered regions span residues 353–391 (NDLNNEEPNSVVAEDGSEIITLDENDQSPNEATEKLRDN), 420–440 (GSLNNADLSQEPITNDGENVD), and 454–502 (ESAF…PSDD). The segment covering 367–378 (DGSEIITLDEND) has biased composition (acidic residues). 2 stretches are compositionally biased toward polar residues: residues 420–436 (GSLNNADLSQEPITNDG) and 462–477 (GTINSSKRRLSVTTDT).

The protein belongs to the RMR1 family.

Its subcellular location is the cytoplasm. It is found in the nucleus. Its function is as follows. Required for normal levels of gene conversion events during meiosis. In Schizosaccharomyces pombe (strain 972 / ATCC 24843) (Fission yeast), this protein is Reduced meiotic recombination protein C1442.04c.